Consider the following 375-residue polypeptide: Sperm microtubule associated protein 2 (375 aa).

The tract at residues 1 to 78 (MGELGEHRAS…MAGEELPETS (78 aa)) is disordered. Acidic residues predominate over residues 59-75 (EPEEEIPPEEMAGEELP). THEG repeat units follow at residues 110–129 (AKGRKKRSRRLLELAKPKTN), 176–195 (TITVPVVSQRMEELSRPKRF), 214–233 (STLEYQASNRLKQLATPKVR), 250–269 (AAQMAVPTPRTLRLAKPRPP), 282–301 (PKPYVSDYNRLLQLATPKAL), 318–337 (VTKNAVASSRIISLAQPKIR), and 352–371 (ASLVAQASPRIYELATPKYI). Ser287 carries the phosphoserine modification.

As to quaternary structure, interacts with CCT5. Testis specific (at protein level). Specifically expressed in spermatids; Sertoli cells maintain the level of expression in spermatids. If isolated spermatids are cultivated for 16 hours alone, the expression of THEG is down-regulated. May require signals from Sertoli cells to initiate changes in its gene expression through spermatogenesis.

It localises to the nucleus. May be involved (but not essential) in spermatogenesis. This is Sperm microtubule associated protein 2 from Mus musculus (Mouse).